We begin with the raw amino-acid sequence, 191 residues long: Protein GrpE (191 aa).

The span at 1-10 shows a compositional bias: basic and acidic residues; it reads MNHEEQKVEA. Positions 1–28 are disordered; it reads MNHEEQKVEAMEQVEAQPVEPTDVDSEV.

Belongs to the GrpE family. As to quaternary structure, homodimer.

It localises to the cytoplasm. Functionally, participates actively in the response to hyperosmotic and heat shock by preventing the aggregation of stress-denatured proteins, in association with DnaK and GrpE. It is the nucleotide exchange factor for DnaK and may function as a thermosensor. Unfolded proteins bind initially to DnaJ; upon interaction with the DnaJ-bound protein, DnaK hydrolyzes its bound ATP, resulting in the formation of a stable complex. GrpE releases ADP from DnaK; ATP binding to DnaK triggers the release of the substrate protein, thus completing the reaction cycle. Several rounds of ATP-dependent interactions between DnaJ, DnaK and GrpE are required for fully efficient folding. This is Protein GrpE from Aeromonas hydrophila subsp. hydrophila (strain ATCC 7966 / DSM 30187 / BCRC 13018 / CCUG 14551 / JCM 1027 / KCTC 2358 / NCIMB 9240 / NCTC 8049).